Consider the following 120-residue polypeptide: MQRNMLRAKLHRATVTQADLDYEGSCGIDEDLLDAADMREYEKIELYNVNNGERFSTYIIKGKRGSGEISLNGAAARRAHVGDLLIICTYAPMNEEEVASYKPKVVLLGEGNKIKAIKET.

Residue serine 25 is the Schiff-base intermediate with substrate; via pyruvic acid of the active site. At serine 25 the chain carries Pyruvic acid (Ser). Threonine 57 lines the substrate pocket. Tyrosine 58 functions as the Proton donor in the catalytic mechanism. 73 to 75 (GAA) is a substrate binding site.

This sequence belongs to the PanD family. In terms of assembly, heterooctamer of four alpha and four beta subunits. The cofactor is pyruvate. Post-translationally, is synthesized initially as an inactive proenzyme, which is activated by self-cleavage at a specific serine bond to produce a beta-subunit with a hydroxyl group at its C-terminus and an alpha-subunit with a pyruvoyl group at its N-terminus.

The protein localises to the cytoplasm. The enzyme catalyses L-aspartate + H(+) = beta-alanine + CO2. The protein operates within cofactor biosynthesis; (R)-pantothenate biosynthesis; beta-alanine from L-aspartate: step 1/1. Its function is as follows. Catalyzes the pyruvoyl-dependent decarboxylation of aspartate to produce beta-alanine. The chain is Aspartate 1-decarboxylase from Ralstonia pickettii (strain 12J).